Consider the following 254-residue polypeptide: U3 small nucleolar RNA-associated protein NOL7 (254 aa).

Residues 1-90 (MVQLRPRLSR…ASARRDKTLL (90 aa)) are disordered. Composition is skewed to acidic residues over residues 18-31 (MVDE…EEEA) and 48-61 (PLDE…EAPE). Over residues 71–90 (EAREEELRVRASARRDKTLL) the composition is skewed to basic and acidic residues. Residue lysine 127 forms a Glycyl lysine isopeptide (Lys-Gly) (interchain with G-Cter in SUMO2) linkage. Residue serine 129 is modified to Phosphoserine. Lysine 157 is covalently cross-linked (Glycyl lysine isopeptide (Lys-Gly) (interchain with G-Cter in SUMO2)). The tract at residues 235-254 (NAKRFKKRWMAKKMKKKTYK) is disordered.

The protein belongs to the UTP16 family. In terms of assembly, part of the small subunit (SSU) processome, composed of more than 70 proteins and the RNA chaperone small nucleolar RNA (snoRNA) U3.

It is found in the nucleus. The protein resides in the nucleolus. Its function is as follows. Functions as part of the small subunit (SSU) processome, first precursor of the small eukaryotic ribosomal subunit that coordinates the first two steps of ribosome biogenesis in transcription of the primary transcript pre-RNA and pre-18S processing. During the assembly of the SSU processome in the nucleolus, many ribosome biogenesis factors, an RNA chaperone and ribosomal proteins associate with the nascent pre-rRNA and work in concert to generate RNA folding, modifications, rearrangements and cleavage as well as targeted degradation of pre-ribosomal RNA by the RNA exosome. This subunit is required for processing of the 5'-external transcribed spacer sequence (5'ETS) of the primary transcript pre-rRNA to yield the 18S rRNA. Also plays a role in maintaining early pre-rRNA levels, either by assisting in its transcription or stability. This is U3 small nucleolar RNA-associated protein NOL7 (Nol7) from Mus musculus (Mouse).